The sequence spans 177 residues: Acireductone dioxygenase (177 aa).

Fe(2+) is bound by residues His-99, His-101, Glu-105, and His-143. Residues His-99, His-101, Glu-105, and His-143 each contribute to the Ni(2+) site.

Belongs to the acireductone dioxygenase (ARD) family. As to quaternary structure, monomer. Fe(2+) is required as a cofactor. Ni(2+) serves as cofactor.

The catalysed reaction is 1,2-dihydroxy-5-(methylsulfanyl)pent-1-en-3-one + O2 = 3-(methylsulfanyl)propanoate + CO + formate + 2 H(+). The enzyme catalyses 1,2-dihydroxy-5-(methylsulfanyl)pent-1-en-3-one + O2 = 4-methylsulfanyl-2-oxobutanoate + formate + 2 H(+). The protein operates within amino-acid biosynthesis; L-methionine biosynthesis via salvage pathway; L-methionine from S-methyl-5-thio-alpha-D-ribose 1-phosphate: step 5/6. In terms of biological role, catalyzes 2 different reactions between oxygen and the acireductone 1,2-dihydroxy-3-keto-5-methylthiopentene (DHK-MTPene) depending upon the metal bound in the active site. Fe-containing acireductone dioxygenase (Fe-ARD) produces formate and 2-keto-4-methylthiobutyrate (KMTB), the alpha-ketoacid precursor of methionine in the methionine recycle pathway. Ni-containing acireductone dioxygenase (Ni-ARD) produces methylthiopropionate, carbon monoxide and formate, and does not lie on the methionine recycle pathway. The polypeptide is Acireductone dioxygenase (Leptospira interrogans serogroup Icterohaemorrhagiae serovar copenhageni (strain Fiocruz L1-130)).